Reading from the N-terminus, the 309-residue chain is Peptide methionine sulfoxide reductase MsrA/MsrB (309 aa).

Residues 1–153 form a peptide methionine sulfoxide reductase A region; sequence MIYLAGGCFW…PNGYCHIDIN (153 aa). Residue cysteine 8 is part of the active site. A MsrB domain is found at 170–293; the sequence is ATEIKEKLSA…NSLSITFIPK (124 aa). The Nucleophile role is filled by cysteine 282.

The protein in the N-terminal section; belongs to the MsrA Met sulfoxide reductase family. It in the C-terminal section; belongs to the MsrB Met sulfoxide reductase family.

The catalysed reaction is L-methionyl-[protein] + [thioredoxin]-disulfide + H2O = L-methionyl-(S)-S-oxide-[protein] + [thioredoxin]-dithiol. It catalyses the reaction [thioredoxin]-disulfide + L-methionine + H2O = L-methionine (S)-S-oxide + [thioredoxin]-dithiol. The enzyme catalyses L-methionyl-[protein] + [thioredoxin]-disulfide + H2O = L-methionyl-(R)-S-oxide-[protein] + [thioredoxin]-dithiol. Functionally, has an important function as a repair enzyme for proteins that have been inactivated by oxidation. Catalyzes the reversible oxidation-reduction of methionine sulfoxide in proteins to methionine. The sequence is that of Peptide methionine sulfoxide reductase MsrA/MsrB (msrAB) from Streptococcus pyogenes serotype M18 (strain MGAS8232).